We begin with the raw amino-acid sequence, 451 residues long: MTTSAQRPERVIVVGGQDWDQVVTAARQMSNSSSRAGDAAEHAGERIVVNMGPQHPSTHGVLRLILEIEGETIVEARCGIGYLHTGIEKNLEFRTWTQGVTFVTRMDYLSPFFNETAYCLGVEKLLGVTDDIPERASVIRVMMMELNRISSHLVALATGGMELGAMTAMFLGFRERELILSVFETITGLRMNSAYIRPGGVAADLPEEGLPQIRELLTLLPTRLRDMENLLNENYIWKARTLGVGYLDLTGCMALGITGPVLRSTGLPHDLRKSQPYCGYQTYDFDVITDDRCDSYGRYLIRVKEMRESLRIVEQCVERLERSTGEPVMITDRKLAWPADLKVGPDGLGNSPEHIAKIMGHSMEGLIHHFKLVTEGIRVPPGQVYVAVESPRGELGVHMVSDGGTRPYRVHYRDPSFTNLQAVAAMCEGGMVADAITAVASIDPVMGGVDR.

The protein belongs to the complex I 49 kDa subunit family. NDH-1 is composed of 14 different subunits. Subunits NuoB, C, D, E, F, and G constitute the peripheral sector of the complex.

It is found in the cell membrane. The enzyme catalyses a quinone + NADH + 5 H(+)(in) = a quinol + NAD(+) + 4 H(+)(out). In terms of biological role, NDH-1 shuttles electrons from NADH, via FMN and iron-sulfur (Fe-S) centers, to quinones in the respiratory chain. The immediate electron acceptor for the enzyme in this species is believed to be a menaquinone. Couples the redox reaction to proton translocation (for every two electrons transferred, four hydrogen ions are translocated across the cytoplasmic membrane), and thus conserves the redox energy in a proton gradient. This Mycolicibacterium gilvum (strain PYR-GCK) (Mycobacterium gilvum (strain PYR-GCK)) protein is NADH-quinone oxidoreductase subunit D.